The following is a 146-amino-acid chain: SMR1 protein (146 aa).

The first 22 residues, Met1–Gly22, serve as a signal peptide directing secretion. Disordered regions lie at residues Val23 to His43 and Thr99 to Lys146. Positions Pro109–Asp139 are enriched in polar residues. N-linked (GlcNAc...) asparagine glycosylation is found at Asn129 and Asn136.

Post-translationally, several O-linked glycosylation sites might be present in the C-terminal part. In terms of tissue distribution, expressed predominantly in the acinar cells of the submandibular gland and to lesser extent in the prostate.

The protein resides in the secreted. Functionally, sialorphin may be involved in the modulation of mineral balance between at least four systems: kidney, bone, tooth and circulation. Submandibular gland peptide T is able to directly or indirectly down-regulate cardiovascular depression induced by septic shock (endotoxin stimuli), or anaphylactic challenge (nematode antigen sensitization). In terms of biological role, sialorphin is an endogenous inhibitor of neprilysin. Inhibits the breakdown of Met-enkephalin and substance P in isolated tissue from the dorsal zone of the rat spinal cord. Has an analgesic effect when administered to rats by intravenous injection. The polypeptide is SMR1 protein (Vcsa1) (Rattus norvegicus (Rat)).